The following is a 510-amino-acid chain: Inositol-3-phosphate synthase (510 aa).

The NAD(+) site is built by G70, G71, N72, N73, D143, I180, Q190, R193, T230, A231, N232, T233, G281, S282, D306, S309, N340, N341, D342, K355, G393, D394, D422, and S423.

Belongs to the myo-inositol 1-phosphate synthase family. NAD(+) serves as cofactor.

It localises to the cytoplasm. The protein localises to the cytosol. It is found in the nucleus. It catalyses the reaction D-glucose 6-phosphate = 1D-myo-inositol 3-phosphate. Its pathway is polyol metabolism; myo-inositol biosynthesis; myo-inositol from D-glucose 6-phosphate: step 1/2. Key enzyme in myo-inositol biosynthesis pathway that catalyzes the conversion of glucose 6-phosphate to 1-myo-inositol 1-phosphate in a NAD-dependent manner. The protein is Inositol-3-phosphate synthase of Nicotiana tabacum (Common tobacco).